The chain runs to 773 residues: E3 ubiquitin-protein ligase RFWD3 (773 aa).

Disordered regions lie at residues 18 to 67 (VAEQ…SQVG), 92 to 117 (RVENINPGASEEHRQPSRVNRPIPVS), 139 to 230 (LRPP…EEVV), and 259 to 279 (GETLPKQSPQKTNPLLPSVSK). S47 is subject to Phosphoserine; by ATM and ATR. The segment covering 50–59 (APPLLQPAPA) has biased composition (low complexity). A Phosphoserine; by ATM and ATR modification is found at S64. The segment covering 151 to 164 (RSRRRRGSASRRSR) has biased composition (basic residues). Residues 186 to 205 (VSRTQPHLPSMSQDSETRNP) are compositionally biased toward polar residues. Low complexity predominate over residues 207–221 (SEDLQVSSSSSSDSE). A compositionally biased stretch (polar residues) spans 263–273 (PKQSPQKTNPL). An RING-type; degenerate zinc finger spans residues 287 to 331 (CTICFEHWTNAGDHRLSALRCGHLFGYKCISKWLKGQARKCPQCN). Residues 361-403 (SLLKEQMLRKQAELESAQCRLQLQVLTDECSKLHSRVQDLQKL) adopt a coiled-coil conformation. WD repeat units follow at residues 494-536 (MHGK…QTYN), 538-576 (GRPVWSCCWCLDESNHIYAGLVNGSILVYDLRNTSSHIQ), and 582-627 (KARC…SHWP).

As to quaternary structure, interacts with MDM2 and p53/TP53. Binds to the RPA complex via direct interaction with RPA2. Interacts with RAD51. Phosphorylated at Ser-46 and Ser-63 upon DNA damage by ATM or ATR. ATM phosphorylation occurs at early times upon DNA damage, while ATR is the major kinase at later times. Phosphorylation by ATM and ATR is required to stabilize p53/TP53. Part of the phosphorylation depends upon RPA2 presence.

It localises to the nucleus. The protein resides in the PML body. The protein localises to the cytoplasm. The catalysed reaction is S-ubiquitinyl-[E2 ubiquitin-conjugating enzyme]-L-cysteine + [acceptor protein]-L-lysine = [E2 ubiquitin-conjugating enzyme]-L-cysteine + N(6)-ubiquitinyl-[acceptor protein]-L-lysine.. The protein operates within protein modification; protein ubiquitination. In terms of biological role, E3 ubiquitin-protein ligase required for the repair of DNA interstrand cross-links (ICL) in response to DNA damage. Plays a key role in RPA-mediated DNA damage signaling and repair. Acts by mediating ubiquitination of the RPA complex (RPA1, RPA2 and RPA3 subunits) and RAD51 at stalled replication forks, leading to remove them from DNA damage sites and promote homologous recombination. Also mediates the ubiquitination of p53/TP53 in the late response to DNA damage, and acts as a positive regulator of p53/TP53 stability, thereby regulating the G1/S DNA damage checkpoint. May act by catalyzing the formation of short polyubiquitin chains on p53/TP53 that are not targeted to the proteasome. In response to ionizing radiation, interacts with MDM2 and enhances p53/TP53 ubiquitination, possibly by restricting MDM2 from extending polyubiquitin chains on ubiquitinated p53/TP53. Required to translesion DNA synthesis across DNA-protein cross-link adducts by catalyzing ubiquitination of proteins on single-stranded DNA (ssDNA). The polypeptide is E3 ubiquitin-protein ligase RFWD3 (RFWD3) (Ailuropoda melanoleuca (Giant panda)).